We begin with the raw amino-acid sequence, 461 residues long: Acetylcholine receptor subunit alpha (461 aa).

Residues 1 to 24 (MILCSYWHVGLVLLLFSCCGLVLG) form the signal peptide. Residues 25–234 (SEHETRLVAN…ITYHFIMQRI (210 aa)) lie on the Extracellular side of the membrane. Disulfide bonds link Cys152-Cys166 and Cys216-Cys217. N-linked (GlcNAc...) asparagine glycosylation occurs at Asn165. 3 consecutive transmembrane segments (helical) span residues 235–259 (PLYFVVNVIIPCLLFSFLTGLVFYL), 267–285 (MTLSISVLLSLTVFLLVIV), and 301–320 (YMLFTMIFVISSIIITVVVI). Residues 321–432 (NTHHRSPSTH…WKYVAMVIDH (112 aa)) are Cytoplasmic-facing. Residues 433–451 (ILLCVFMLICIIGTVSVFA) form a helical membrane-spanning segment.

This sequence belongs to the ligand-gated ion channel (TC 1.A.9) family. Acetylcholine receptor (TC 1.A.9.1) subfamily. Alpha-1/CHRNA1 sub-subfamily. As to quaternary structure, pentamer of two alpha chains, and one each of the beta, delta, and gamma chains.

The protein localises to the postsynaptic cell membrane. Its subcellular location is the cell membrane. The catalysed reaction is K(+)(in) = K(+)(out). It carries out the reaction Na(+)(in) = Na(+)(out). Functionally, upon acetylcholine binding, the AChR responds by an extensive change in conformation that affects all subunits and leads to opening of an ion-conducting channel across the plasma membrane. The polypeptide is Acetylcholine receptor subunit alpha (CHRNA1) (Tetronarce californica (Pacific electric ray)).